The chain runs to 301 residues: Probable alpha-L-glutamate ligase (301 aa).

In terms of domain architecture, ATP-grasp spans 104 to 287; sequence LQLLSRRGIG…VAGMIIEHLE (184 aa). ATP-binding positions include lysine 141, 178-179, aspartate 187, and 211-213; these read EY and RSN. Mg(2+) contacts are provided by aspartate 248, glutamate 260, and asparagine 262. The Mn(2+) site is built by aspartate 248, glutamate 260, and asparagine 262.

It belongs to the RimK family. Mg(2+) serves as cofactor. Requires Mn(2+) as cofactor.

This chain is Probable alpha-L-glutamate ligase, found in Pseudomonas entomophila (strain L48).